Here is an 848-residue protein sequence, read N- to C-terminus: MYLYIETLKQRLDAINQLRVDRALAAMGPAFQQVYSLLPTLLHYHHPRMPGYLDGNVPKGICLYTPDETQRHYLNELELYRGMSVQDPPKGELPITGVYTMGSTSSVGQSCSSDLDIWVCHQSWLDSEERQLLQRKCSLLESWAASLGVEVSFFLIDENRFRHNESGSLGGEDCGSTQHILLLDEFYRTAVRLAGKRILWNMVPCDEEEHYDDYVMTLYAQGVLTPNEWLDLGGLSSLSAEEYFGASLWQLYKSIDSPYKAVLKTLLLEAYSWEYPNPRLLAKDIKQRLHDGEIVSFGLDPYCMMLERVTEYLTAIEDFTRLDLVRRCFYLKVCEKLSRERACVGWRRAVLSQLVSEWGWDEARLAMLDNRANWKIDQVREAHNELLDAMMQSYRNLIRFARRNNLSVSASPQDIGVLTRKLYAAFEALPGKVTLVNPQISPDLSEPNLTFIYVPPGRANRSGWYLYNRAPNIESIISHQPLEYNRYLNKLVAWAWFNGLLTSRTRLYIKGNGIVDLPKLQEMVADVSHHFPLRLPAPTPKALYSPCEIRHLAIIVNLEYDPTAAFRNQVVHFDFRKLDVFSFGENQNCLVGSVDLLYRNSWNEVRTLHFNGEQSMIEALKTILGKMHQDAAPPDSVEVFCYSQHLRGLIRTRVQQLVSECIELRLSSTRQETGRFKALRVSGQTWGLFFERLNVSVQKLENAIEFYGAISHNKLHGLSVQVETNHVKLPAVVDGFASEGIIQFFFEETQDENGFNIYILDESNRVEVYHHCEGSKEELVRDVSRFYSSSHDRFTYGSSFINFNLPQFYQIVKVDGREQVIPFRTKSIGNLPPANQDHDTPLLQQYFS.

The segment at 1-535 (MYLYIETLKQ…DVSHHFPLRL (535 aa)) is catalytic. The interval 541 to 848 (KALYSPCEIR…DTPLLQQYFS (308 aa)) is regulatory. His609 carries the phosphohistidine; by CRR modification.

Belongs to the adenylyl cyclase class-1 family.

It localises to the cytoplasm. The catalysed reaction is ATP = 3',5'-cyclic AMP + diphosphate. In Shigella flexneri, this protein is Adenylate cyclase (cyaA).